Consider the following 331-residue polypeptide: GTP-binding protein RHO5 (331 aa).

Glycine 10 to threonine 17 is a GTP binding site. The tract at residues alanine 51–threonine 76 is disordered. Residues serine 66–serine 75 are compositionally biased toward low complexity. Residues aspartate 87 to glutamine 91 and threonine 156 to aspartate 159 contribute to the GTP site. Serine 223 and serine 228 each carry phosphoserine. Phosphothreonine is present on residues threonine 232 and threonine 244. The interval threonine 239 to leucine 331 is disordered. Residues histidine 258–glutamine 273 are compositionally biased toward polar residues. Lysine 276 is covalently cross-linked (Glycyl lysine isopeptide (Lys-Gly) (interchain with G-Cter in ubiquitin)). The span at glycine 287 to lysine 297 shows a compositional bias: basic and acidic residues. Residues histidine 308 to leucine 331 are compositionally biased toward basic residues. Cysteine 328 is subject to Cysteine methyl ester. Residue cysteine 328 is the site of S-geranylgeranyl cysteine attachment. A propeptide spans valine 329–leucine 331 (removed in mature form).

Belongs to the small GTPase superfamily. Rho family. Interacts with RGD2.

The protein localises to the membrane. Its subcellular location is the mitochondrion. Its function is as follows. Small GTPase that negatively regulates a MAP kinase branch, downstream of SLT2, of the PKC1-mediated signal transduction pathway. With its specific guanine nucleotide exchange factor (GEF), the heterodimeric complex DCK1/LMO1, relocates to mitochondria upon oxidative stress and triggers cell death. The DCK1/LMO1/RHO5 signaling module that mediates mitochondrial turnover under nitrogen starvation conditions via mitophagy. The DCK1/LMO1/RHO5 signaling module also plays a role in cell wall integrity signaling. The chain is GTP-binding protein RHO5 from Saccharomyces cerevisiae (strain ATCC 204508 / S288c) (Baker's yeast).